A 444-amino-acid chain; its full sequence is MAIFRQLSLGAKAALAAGTVFVSMIVSRSYLAESLEFRAWRCLFRLQLALFVNSLMLLGSIYIWRSTVSNLRHSPAAESACFQLWKMVVAAFLALAHSSFFTMIFLVAEEPYLFSLVAYTCLGAYVIMLCFLCVLSGMEQAYQLLAWRAGRAVGSLDKTRKLALRPALAVMVTTVLSVVGLLNAAQPPAVTTVEVPVHRLPPSMNSLKIVLLSDIHLGPTVGRTKMDMFVRMVNTLEPDVTVIVGDLCDSEASVLRTAVAPLGQLRSRLGTYFVTGNHEYYTSDVSNWFALLMSLNVQPLHNENVRISATGAHREDDDWICLAGVDDIEANILHYTGHGMDLEKALEGCSPDHPTILLAHQPLAAKRALQARPDINLILSGHTHAGQIFPLNVAAYLLNPFFAGLYQVAETTFVYVSPGTAYYGIPMRLGSRAEITQLILQAAP.

Helical transmembrane passes span 7 to 27, 43 to 63, 87 to 107, 114 to 134, and 162 to 182; these read LSLGAKAALAAGTVFVSMIVS, LFRLQLALFVNSLMLLGSIYI, MVVAAFLALAHSSFFTMIFLV, FSLVAYTCLGAYVIMLCFLCV, and LALRPALAVMVTTVLSVVGLL. A divalent metal cation is bound by residues aspartate 214, histidine 216, aspartate 246, asparagine 277, histidine 382, and histidine 384.

This sequence belongs to the metallophosphoesterase superfamily. LOC643853 family. A divalent metal cation serves as cofactor.

The protein localises to the membrane. The chain is Transmembrane protein with metallophosphoesterase domain (TMPPE) from Bos taurus (Bovine).